We begin with the raw amino-acid sequence, 191 residues long: Cytochrome c biogenesis ATP-binding export protein CcmA (191 aa).

One can recognise an ABC transporter domain in the interval 6-189 (LVATDIACRR…RVRTLAIRNF (184 aa)). 38-45 (GANGIGKS) contributes to the ATP binding site.

The protein belongs to the ABC transporter superfamily. CcmA exporter (TC 3.A.1.107) family. In terms of assembly, the complex is composed of two ATP-binding proteins (CcmA) and two transmembrane proteins (CcmB).

Its subcellular location is the cell inner membrane. It catalyses the reaction heme b(in) + ATP + H2O = heme b(out) + ADP + phosphate + H(+). Functionally, part of the ABC transporter complex CcmAB involved in the biogenesis of c-type cytochromes; once thought to export heme, this seems not to be the case, but its exact role is uncertain. Responsible for energy coupling to the transport system. The protein is Cytochrome c biogenesis ATP-binding export protein CcmA of Novosphingobium aromaticivorans (strain ATCC 700278 / DSM 12444 / CCUG 56034 / CIP 105152 / NBRC 16084 / F199).